The chain runs to 264 residues: Myozenin-2 (264 aa).

Arg-53 is modified (omega-N-methylarginine). Residues Gly-90–Pro-135 form a disordered region. A Phosphoserine modification is found at Ser-101. The segment covering Leu-106–Pro-120 has biased composition (pro residues). A phosphothreonine mark is found at Thr-107 and Thr-111. Ser-116 is modified (phosphoserine).

It belongs to the myozenin family. In terms of assembly, interacts via its C-terminus with spectrin repeats 3 and 4 of ACTN2. Interacts with ACTN1, LDB3, MYOT and PPP3CA.

It is found in the cytoplasm. The protein localises to the myofibril. It localises to the sarcomere. Its subcellular location is the z line. Functionally, myozenins may serve as intracellular binding proteins involved in linking Z line proteins such as alpha-actinin, gamma-filamin, TCAP/telethonin, LDB3/ZASP and localizing calcineurin signaling to the sarcomere. Plays an important role in the modulation of calcineurin signaling. May play a role in myofibrillogenesis. The chain is Myozenin-2 (MYOZ2) from Pongo abelii (Sumatran orangutan).